Reading from the N-terminus, the 137-residue chain is Glutamate mutase sigma subunit (137 aa).

Residues 3-137 (KKTIVLGVIG…ADLKEDLNIK (135 aa)) form the B12-binding domain. Adenosylcob(III)alamin contacts are provided by residues 13-17 (SDCHA), His16, 61-63 (SSL), and 93-97 (NIVVG).

Belongs to the methylaspartate mutase GlmS subunit family. As to quaternary structure, heterotetramer composed of 2 epsilon subunits (GlmE) and 2 sigma subunits (GlmS). GlmE exists as a homodimer and GlmS as a monomer. Adenosylcob(III)alamin is required as a cofactor.

The enzyme catalyses (2S,3S)-3-methyl-L-aspartate = L-glutamate. It participates in amino-acid degradation; L-glutamate degradation via mesaconate pathway; acetate and pyruvate from L-glutamate: step 1/4. In terms of biological role, catalyzes the carbon skeleton rearrangement of L-glutamate to L-threo-3-methylaspartate ((2S,3S)-3-methylaspartate). This chain is Glutamate mutase sigma subunit, found in Clostridium tetani (strain Massachusetts / E88).